Here is a 184-residue protein sequence, read N- to C-terminus: Elongation factor P (184 aa).

It belongs to the elongation factor P family.

Its subcellular location is the cytoplasm. The protein operates within protein biosynthesis; polypeptide chain elongation. Its function is as follows. Involved in peptide bond synthesis. Stimulates efficient translation and peptide-bond synthesis on native or reconstituted 70S ribosomes in vitro. Probably functions indirectly by altering the affinity of the ribosome for aminoacyl-tRNA, thus increasing their reactivity as acceptors for peptidyl transferase. This is Elongation factor P from Albidiferax ferrireducens (strain ATCC BAA-621 / DSM 15236 / T118) (Rhodoferax ferrireducens).